We begin with the raw amino-acid sequence, 309 residues long: Succinate dehydrogenase [ubiquinone] iron-sulfur subunit 3, mitochondrial (309 aa).

A mitochondrion-targeting transit peptide spans methionine 1–leucine 22. Residues phenylalanine 69–methionine 160 form the 2Fe-2S ferredoxin-type domain. [2Fe-2S] cluster-binding residues include cysteine 120, cysteine 125, and cysteine 140. The 4Fe-4S ferredoxin-type domain occupies aspartate 202–phenylalanine 232. Cysteine 212, cysteine 215, and cysteine 218 together coordinate [4Fe-4S] cluster. Cysteine 222 provides a ligand contact to [3Fe-4S] cluster. Residue tryptophan 227 participates in a ubiquinone binding. [3Fe-4S] cluster-binding residues include cysteine 270 and cysteine 276. Cysteine 280 contributes to the [4Fe-4S] cluster binding site.

It belongs to the succinate dehydrogenase/fumarate reductase iron-sulfur protein family. As to quaternary structure, component of complex II composed of eight subunits in plants: four classical SDH subunits SDH1, SDH2, SDH3 and SDH4 (a flavoprotein (FP), an iron-sulfur protein (IP), and a cytochrome b composed of a large and a small subunit.), as well as four subunits unknown in mitochondria from bacteria and heterotrophic eukaryotes. Requires [2Fe-2S] cluster as cofactor. The cofactor is [3Fe-4S] cluster. It depends on [4Fe-4S] cluster as a cofactor.

Its subcellular location is the mitochondrion inner membrane. The catalysed reaction is a quinone + succinate = fumarate + a quinol. It functions in the pathway carbohydrate metabolism; tricarboxylic acid cycle; fumarate from succinate (eukaryal route): step 1/1. In terms of biological role, iron-sulfur protein (IP) subunit of succinate dehydrogenase (SDH) that is involved in complex II of the mitochondrial electron transport chain and is responsible for transferring electrons from succinate to ubiquinone (coenzyme Q). The chain is Succinate dehydrogenase [ubiquinone] iron-sulfur subunit 3, mitochondrial (SDH2-3) from Arabidopsis thaliana (Mouse-ear cress).